We begin with the raw amino-acid sequence, 382 residues long: Na(+)/H(+) antiporter NhaA 2 (382 aa).

Transmembrane regions (helical) follow at residues 7–27 (MVLS…LALL), 58–78 (LDLW…GLEL), 94–114 (SLPI…FIAI), 124–144 (GWAI…MLLG), 153–173 (LFLL…IALF), 178–198 (LSAL…LLNY), 199–219 (YHIT…IAML), 255–275 (NPWV…GIDI), 291–311 (IILG…FIAI), 327–347 (FYGI…IDGL), and 361–381 (LAIL…LKIV).

Belongs to the NhaA Na(+)/H(+) (TC 2.A.33) antiporter family.

It is found in the cell inner membrane. It catalyses the reaction Na(+)(in) + 2 H(+)(out) = Na(+)(out) + 2 H(+)(in). Its function is as follows. Na(+)/H(+) antiporter that extrudes sodium in exchange for external protons. In Campylobacter jejuni (strain RM1221), this protein is Na(+)/H(+) antiporter NhaA 2.